The sequence spans 210 residues: MMTPMQGVAATPINSHQFEPYTKENSEANADFSFQTLADVTKAILNHAFWLAEQKQNLSLKEYKKLLYNQGWQGEEKKYLKIAATFGKFEPQDFAQVEPRTIYQLAERNKQYQKVIDRLLDLSVINQETVRTLIQKQRTPRADRPKKPSIWRRLKNGGRYCQIPPIHEASEQTGTTLQRMMDEEGLSAQQIVAEAIALRQAYKEGQLTIS.

This is an uncharacterized protein from Nostoc sp. (strain PCC 7120 / SAG 25.82 / UTEX 2576).